Here is a 126-residue protein sequence, read N- to C-terminus: Ribonuclease P protein component (126 aa).

The protein belongs to the RnpA family. Consists of a catalytic RNA component (M1 or rnpB) and a protein subunit.

The enzyme catalyses Endonucleolytic cleavage of RNA, removing 5'-extranucleotides from tRNA precursor.. RNaseP catalyzes the removal of the 5'-leader sequence from pre-tRNA to produce the mature 5'-terminus. It can also cleave other RNA substrates such as 4.5S RNA. The protein component plays an auxiliary but essential role in vivo by binding to the 5'-leader sequence and broadening the substrate specificity of the ribozyme. This chain is Ribonuclease P protein component, found in Rhodococcus erythropolis (strain PR4 / NBRC 100887).